A 226-amino-acid chain; its full sequence is Pyridoxal 5'-phosphate synthase subunit PdxT (226 aa).

Residue 60-62 (GES) participates in L-glutamine binding. The active-site Nucleophile is cysteine 92. Residues arginine 121 and 150 to 151 (IR) contribute to the L-glutamine site. Residues histidine 191 and glutamate 193 each act as charge relay system in the active site.

This sequence belongs to the glutaminase PdxT/SNO family. As to quaternary structure, in the presence of PdxS, forms a dodecamer of heterodimers. Only shows activity in the heterodimer.

It catalyses the reaction aldehydo-D-ribose 5-phosphate + D-glyceraldehyde 3-phosphate + L-glutamine = pyridoxal 5'-phosphate + L-glutamate + phosphate + 3 H2O + H(+). The enzyme catalyses L-glutamine + H2O = L-glutamate + NH4(+). It functions in the pathway cofactor biosynthesis; pyridoxal 5'-phosphate biosynthesis. In terms of biological role, catalyzes the hydrolysis of glutamine to glutamate and ammonia as part of the biosynthesis of pyridoxal 5'-phosphate. The resulting ammonia molecule is channeled to the active site of PdxS. In Nocardia farcinica (strain IFM 10152), this protein is Pyridoxal 5'-phosphate synthase subunit PdxT.